The sequence spans 384 residues: N-acetylneuraminate epimerase (384 aa).

The signal sequence occupies residues 1–24 (MNMKTLLTYATLLSVTAFSHVVYA). 7 Kelch repeats span residues 46-90 (KVYV…SVIG), 92-145 (YIYL…YSPD), 147-184 (RQILFFGGYNKAYFDRYLRDISTTDKQVNPEVWQRIVD), 185-230 (DYMG…VIEG), 233-281 (VTLI…VAGA), 303-352 (QAFE…TTSE), and 354-383 (VLIVGGEKSGKEMSHKVYMLAWNGSTVEVI). The active-site Proton acceptor is glutamate 239.

This sequence belongs to the NanM family. Homodimer.

It localises to the periplasm. It catalyses the reaction N-acetyl-alpha-neuraminate = N-acetyl-beta-neuraminate. Converts alpha-N-acetylneuranimic acid (Neu5Ac) to the beta-anomer, accelerating the equilibrium between the alpha- and beta-anomers. Probably facilitates sialidase-negative bacteria to compete successfully for limited amounts of extracellular Neu5Ac, which is likely taken up in the beta-anomer. In addition, the rapid removal of sialic acid from solution might be advantageous to the bacterium to damp down host responses. The sequence is that of N-acetylneuraminate epimerase from Vibrio cholerae serotype O1 (strain ATCC 39315 / El Tor Inaba N16961).